The chain runs to 379 residues: Homoserine O-succinyltransferase (379 aa).

One can recognise an AB hydrolase-1 domain in the interval 51–360; the sequence is NAVLICHALS…DSPYGHDAFL (310 aa). Serine 157 (nucleophile) is an active-site residue. Substrate is bound at residue arginine 227. Residues aspartate 323 and histidine 356 contribute to the active site. Residue aspartate 357 coordinates substrate.

This sequence belongs to the AB hydrolase superfamily. MetX family. As to quaternary structure, homodimer.

It localises to the cytoplasm. It carries out the reaction L-homoserine + succinyl-CoA = O-succinyl-L-homoserine + CoA. It functions in the pathway amino-acid biosynthesis; L-methionine biosynthesis via de novo pathway; O-succinyl-L-homoserine from L-homoserine: step 1/1. In terms of biological role, transfers a succinyl group from succinyl-CoA to L-homoserine, forming succinyl-L-homoserine. In Pseudomonas putida (strain GB-1), this protein is Homoserine O-succinyltransferase.